Here is a 384-residue protein sequence, read N- to C-terminus: Anhydro-N-acetylmuramic acid kinase (384 aa).

Residue 9-16 (GTSVDGID) participates in ATP binding.

Belongs to the anhydro-N-acetylmuramic acid kinase family.

It carries out the reaction 1,6-anhydro-N-acetyl-beta-muramate + ATP + H2O = N-acetyl-D-muramate 6-phosphate + ADP + H(+). The protein operates within amino-sugar metabolism; 1,6-anhydro-N-acetylmuramate degradation. It functions in the pathway cell wall biogenesis; peptidoglycan recycling. Functionally, catalyzes the specific phosphorylation of 1,6-anhydro-N-acetylmuramic acid (anhMurNAc) with the simultaneous cleavage of the 1,6-anhydro ring, generating MurNAc-6-P. Is required for the utilization of anhMurNAc either imported from the medium or derived from its own cell wall murein, and thus plays a role in cell wall recycling. This is Anhydro-N-acetylmuramic acid kinase from Rippkaea orientalis (strain PCC 8801 / RF-1) (Cyanothece sp. (strain PCC 8801)).